We begin with the raw amino-acid sequence, 439 residues long: Serine hydroxymethyltransferase (439 aa).

(6S)-5,6,7,8-tetrahydrofolate is bound at residue 127 to 129 (AHV). Position 233 is an N6-(pyridoxal phosphate)lysine (Lys-233).

It belongs to the SHMT family. In terms of assembly, homodimer. Pyridoxal 5'-phosphate is required as a cofactor.

Its subcellular location is the cytoplasm. Its pathway is amino-acid biosynthesis; glycine biosynthesis; glycine from L-serine: step 1/1. Functionally, catalyzes the reversible interconversion of serine and glycine with a modified folate serving as the one-carbon carrier. Also exhibits a pteridine-independent aldolase activity toward beta-hydroxyamino acids, producing glycine and aldehydes, via a retro-aldol mechanism. This Aeropyrum pernix (strain ATCC 700893 / DSM 11879 / JCM 9820 / NBRC 100138 / K1) protein is Serine hydroxymethyltransferase.